Here is a 362-residue protein sequence, read N- to C-terminus: S-adenosylmethionine:tRNA ribosyltransferase-isomerase (362 aa).

This sequence belongs to the QueA family. As to quaternary structure, monomer.

The protein localises to the cytoplasm. It carries out the reaction 7-aminomethyl-7-carbaguanosine(34) in tRNA + S-adenosyl-L-methionine = epoxyqueuosine(34) in tRNA + adenine + L-methionine + 2 H(+). It participates in tRNA modification; tRNA-queuosine biosynthesis. Its function is as follows. Transfers and isomerizes the ribose moiety from AdoMet to the 7-aminomethyl group of 7-deazaguanine (preQ1-tRNA) to give epoxyqueuosine (oQ-tRNA). This chain is S-adenosylmethionine:tRNA ribosyltransferase-isomerase, found in Deinococcus radiodurans (strain ATCC 13939 / DSM 20539 / JCM 16871 / CCUG 27074 / LMG 4051 / NBRC 15346 / NCIMB 9279 / VKM B-1422 / R1).